A 288-amino-acid chain; its full sequence is HTH-type transcriptional regulator CzcR (288 aa).

An HTH lysR-type domain is found at M1–S58. Positions I18–K37 form a DNA-binding region, H-T-H motif.

Belongs to the LysR transcriptional regulatory family.

The polypeptide is HTH-type transcriptional regulator CzcR (czcR) (Bacillus subtilis (strain 168)).